Reading from the N-terminus, the 265-residue chain is Glutamate racemase (265 aa).

Substrate is bound by residues 7 to 8 (DS) and 39 to 40 (YG). C71 (proton donor/acceptor) is an active-site residue. Residue 72–73 (NT) participates in substrate binding. The active-site Proton donor/acceptor is C184. Residue 185–186 (TH) participates in substrate binding.

This sequence belongs to the aspartate/glutamate racemases family.

The catalysed reaction is L-glutamate = D-glutamate. It participates in cell wall biogenesis; peptidoglycan biosynthesis. Functionally, provides the (R)-glutamate required for cell wall biosynthesis. This chain is Glutamate racemase, found in Sulfurovum sp. (strain NBC37-1).